Consider the following 490-residue polypeptide: Cytochrome P450 90D2 (490 aa).

Residues 4–24 (AAAGWAAPAFAVAAVVIWVVL) form a helical membrane-spanning segment. Position 437 (C437) interacts with heme.

The protein belongs to the cytochrome P450 family. Heme serves as cofactor.

The protein localises to the membrane. It carries out the reaction 6-deoxoteasterone + reduced [NADPH--hemoprotein reductase] + O2 = 3-dehydro-6-deoxoteasterone + oxidized [NADPH--hemoprotein reductase] + 2 H2O + H(+). It functions in the pathway plant hormone biosynthesis; brassinosteroid biosynthesis. Functionally, catalyzes the C6-oxidation step in brassinosteroids biosynthesis. May convert 6-deoxoteasterone (6-deoxoTE) to 3-dehydro-6-deoxoteasterone (6-deoxo3DT, 6-deoxo3DHT), and teasterone (TE) to 3-dehydroteasterone (3DT, 3-DHT). Involved in the elongation of leaf sheaths and stems. The sequence is that of Cytochrome P450 90D2 from Oryza sativa subsp. indica (Rice).